We begin with the raw amino-acid sequence, 441 residues long: Ribosomal protein uS12 methylthiotransferase RimO (441 aa).

Positions 6-116 (QKVGIVSLGC…VVAAVHEAAP (111 aa)) constitute an MTTase N-terminal domain. [4Fe-4S] cluster-binding residues include Cys-15, Cys-51, Cys-80, Cys-147, Cys-151, and Cys-154. Residues 133 to 370 (LTPRHYAYLK…MAAQQEISER (238 aa)) enclose the Radical SAM core domain. Positions 373–439 (AQKVGTVIEA…EYDLWGSLAG (67 aa)) constitute a TRAM domain.

The protein belongs to the methylthiotransferase family. RimO subfamily. The cofactor is [4Fe-4S] cluster.

The protein localises to the cytoplasm. It carries out the reaction L-aspartate(89)-[ribosomal protein uS12]-hydrogen + (sulfur carrier)-SH + AH2 + 2 S-adenosyl-L-methionine = 3-methylsulfanyl-L-aspartate(89)-[ribosomal protein uS12]-hydrogen + (sulfur carrier)-H + 5'-deoxyadenosine + L-methionine + A + S-adenosyl-L-homocysteine + 2 H(+). Its function is as follows. Catalyzes the methylthiolation of an aspartic acid residue of ribosomal protein uS12. The polypeptide is Ribosomal protein uS12 methylthiotransferase RimO (Rhodospirillum rubrum (strain ATCC 11170 / ATH 1.1.1 / DSM 467 / LMG 4362 / NCIMB 8255 / S1)).